Reading from the N-terminus, the 375-residue chain is Beta sliding clamp (375 aa).

The protein belongs to the beta sliding clamp family. As to quaternary structure, forms a ring-shaped head-to-tail homodimer around DNA which binds and tethers DNA polymerases and other proteins to the DNA. The DNA replisome complex has a single clamp-loading complex (3 tau and 1 each of delta, delta', psi and chi subunits) which binds 3 Pol III cores (1 core on the leading strand and 2 on the lagging strand) each with a beta sliding clamp dimer. Additional proteins in the replisome are other copies of gamma, psi and chi, Ssb, DNA helicase and RNA primase.

Its subcellular location is the cytoplasm. Confers DNA tethering and processivity to DNA polymerases and other proteins. Acts as a clamp, forming a ring around DNA (a reaction catalyzed by the clamp-loading complex) which diffuses in an ATP-independent manner freely and bidirectionally along dsDNA. Initially characterized for its ability to contact the catalytic subunit of DNA polymerase III (Pol III), a complex, multichain enzyme responsible for most of the replicative synthesis in bacteria; Pol III exhibits 3'-5' exonuclease proofreading activity. The beta chain is required for initiation of replication as well as for processivity of DNA replication. The chain is Beta sliding clamp (dnaN) from Synechococcus elongatus (strain ATCC 33912 / PCC 7942 / FACHB-805) (Anacystis nidulans R2).